The sequence spans 746 residues: Exocyst complex component 3-like protein (746 aa).

A disordered region spans residues 1–23; that stretch reads MDSAAKDEMQPALSPGPEWPEQE. Residues 1 to 370 form a mediates interaction with EXOC2, EXOC4 and EXOC5 region; it reads MDSAAKDEMQ…DVSQLEPLLT (370 aa).

The protein belongs to the SEC6 family. In terms of assembly, interacts with EXOC2, EXOC4 and EXOC5; may be part of the exocyst.

It localises to the cytoplasmic vesicle. It is found in the secretory vesicle. Functionally, as part of the exocyst, may play a role in regulated exocytosis of insulin granules. The protein is Exocyst complex component 3-like protein (EXOC3L1) of Homo sapiens (Human).